Reading from the N-terminus, the 280-residue chain is NAD kinase (280 aa).

D60 serves as the catalytic Proton acceptor. Residues 60–61 (DG), 134–135 (ND), R145, D164, 175–180 (TAYSLS), and Q234 each bind NAD(+).

This sequence belongs to the NAD kinase family. Requires a divalent metal cation as cofactor.

It localises to the cytoplasm. The enzyme catalyses NAD(+) + ATP = ADP + NADP(+) + H(+). Involved in the regulation of the intracellular balance of NAD and NADP, and is a key enzyme in the biosynthesis of NADP. Catalyzes specifically the phosphorylation on 2'-hydroxyl of the adenosine moiety of NAD to yield NADP. The chain is NAD kinase from Carboxydothermus hydrogenoformans (strain ATCC BAA-161 / DSM 6008 / Z-2901).